The chain runs to 236 residues: 2-C-methyl-D-erythritol 4-phosphate cytidylyltransferase (236 aa).

This sequence belongs to the IspD/TarI cytidylyltransferase family. IspD subfamily. As to quaternary structure, homodimer.

It carries out the reaction 2-C-methyl-D-erythritol 4-phosphate + CTP + H(+) = 4-CDP-2-C-methyl-D-erythritol + diphosphate. Its pathway is isoprenoid biosynthesis; isopentenyl diphosphate biosynthesis via DXP pathway; isopentenyl diphosphate from 1-deoxy-D-xylulose 5-phosphate: step 2/6. Functionally, catalyzes the formation of 4-diphosphocytidyl-2-C-methyl-D-erythritol from CTP and 2-C-methyl-D-erythritol 4-phosphate (MEP). The protein is 2-C-methyl-D-erythritol 4-phosphate cytidylyltransferase of Buchnera aphidicola subsp. Schizaphis graminum (strain Sg).